Consider the following 377-residue polypeptide: GDSL esterase/lipase 4 (377 aa).

A signal peptide spans 1–21 (MASPRFNSIIIILFICTISLS). Ser44 functions as the Nucleophile in the catalytic mechanism. 5 N-linked (GlcNAc...) asparagine glycosylation sites follow: Asn135, Asn188, Asn194, Asn207, and Asn241. Active-site residues include Asp342 and His345. A glycan (N-linked (GlcNAc...) asparagine) is linked at Asn364.

The protein belongs to the 'GDSL' lipolytic enzyme family.

The protein localises to the secreted. The chain is GDSL esterase/lipase 4 (GLIP4) from Arabidopsis thaliana (Mouse-ear cress).